The following is a 237-amino-acid chain: Type III pantothenate kinase (237 aa).

6-13 is a binding site for ATP; it reads DAGNSRVK. Residues tyrosine 86 and 93 to 96 each bind substrate; that span reads GADR. Aspartate 95 serves as the catalytic Proton acceptor. Threonine 118 contributes to the ATP binding site. Threonine 168 contributes to the substrate binding site.

Belongs to the type III pantothenate kinase family. Homodimer. NH4(+) serves as cofactor. It depends on K(+) as a cofactor.

It is found in the cytoplasm. The enzyme catalyses (R)-pantothenate + ATP = (R)-4'-phosphopantothenate + ADP + H(+). Its pathway is cofactor biosynthesis; coenzyme A biosynthesis; CoA from (R)-pantothenate: step 1/5. Catalyzes the phosphorylation of pantothenate (Pan), the first step in CoA biosynthesis. The protein is Type III pantothenate kinase of Chromobacterium violaceum (strain ATCC 12472 / DSM 30191 / JCM 1249 / CCUG 213 / NBRC 12614 / NCIMB 9131 / NCTC 9757 / MK).